Consider the following 59-residue polypeptide: Large ribosomal subunit protein bL32 (59 aa).

2 disordered regions span residues 1-23 and 35-59; these read MAVQ…DFLT and EVHL…TKND. A compositionally biased stretch (basic residues) spans 49–59; sequence RGKKVVKTKND.

Belongs to the bacterial ribosomal protein bL32 family.

This chain is Large ribosomal subunit protein bL32, found in Burkholderia ambifaria (strain MC40-6).